The primary structure comprises 367 residues: tRNA/tmRNA (uracil-C(5))-methyltransferase (367 aa).

S-adenosyl-L-methionine-binding residues include glutamine 190, tyrosine 218, asparagine 223, glutamate 239, and aspartate 299. Cysteine 324 (nucleophile) is an active-site residue. The active-site Proton acceptor is the glutamate 358.

Belongs to the class I-like SAM-binding methyltransferase superfamily. RNA M5U methyltransferase family. TrmA subfamily.

It carries out the reaction uridine(54) in tRNA + S-adenosyl-L-methionine = 5-methyluridine(54) in tRNA + S-adenosyl-L-homocysteine + H(+). The catalysed reaction is uridine(341) in tmRNA + S-adenosyl-L-methionine = 5-methyluridine(341) in tmRNA + S-adenosyl-L-homocysteine + H(+). Its function is as follows. Dual-specificity methyltransferase that catalyzes the formation of 5-methyluridine at position 54 (m5U54) in all tRNAs, and that of position 341 (m5U341) in tmRNA (transfer-mRNA). In Musicola paradisiaca (strain Ech703) (Dickeya paradisiaca), this protein is tRNA/tmRNA (uracil-C(5))-methyltransferase.